The primary structure comprises 491 residues: Chromosomal replication initiator protein DnaA (491 aa).

Residues 1–86 (MTDELNSQFT…VEALSRRLGE (86 aa)) form a domain I, interacts with DnaA modulators region. Residues 86–150 (ENVELGVRIA…GADKAETPDT (65 aa)) form a domain II region. The domain III, AAA+ region stretch occupies residues 151 to 367 (SLNARYTFES…GALIRVTAFA (217 aa)). Gly195, Gly197, Lys198, and Thr199 together coordinate ATP. The interval 368–491 (SLNKSPIELS…TARIRQRSRH (124 aa)) is domain IV, binds dsDNA.

This sequence belongs to the DnaA family. In terms of assembly, oligomerizes as a right-handed, spiral filament on DNA at oriC.

It is found in the cytoplasm. In terms of biological role, plays an essential role in the initiation and regulation of chromosomal replication. ATP-DnaA binds to the origin of replication (oriC) to initiate formation of the DNA replication initiation complex once per cell cycle. Binds the DnaA box (a 9 base pair repeat at the origin) and separates the double-stranded (ds)DNA. Forms a right-handed helical filament on oriC DNA; dsDNA binds to the exterior of the filament while single-stranded (ss)DNA is stabiized in the filament's interior. The ATP-DnaA-oriC complex binds and stabilizes one strand of the AT-rich DNA unwinding element (DUE), permitting loading of DNA polymerase. After initiation quickly degrades to an ADP-DnaA complex that is not apt for DNA replication. Binds acidic phospholipids. This chain is Chromosomal replication initiator protein DnaA, found in Mycobacteroides abscessus (strain ATCC 19977 / DSM 44196 / CCUG 20993 / CIP 104536 / JCM 13569 / NCTC 13031 / TMC 1543 / L948) (Mycobacterium abscessus).